The following is a 260-amino-acid chain: Triosephosphate isomerase (260 aa).

11–13 (NWK) is a binding site for substrate. His103 (electrophile) is an active-site residue. The active-site Proton acceptor is the Glu175. Substrate-binding positions include Gly181, Ser220, and 241–242 (GG).

Belongs to the triosephosphate isomerase family. In terms of assembly, homodimer.

Its subcellular location is the cytoplasm. The catalysed reaction is D-glyceraldehyde 3-phosphate = dihydroxyacetone phosphate. Its pathway is carbohydrate biosynthesis; gluconeogenesis. The protein operates within carbohydrate degradation; glycolysis; D-glyceraldehyde 3-phosphate from glycerone phosphate: step 1/1. Functionally, involved in the gluconeogenesis. Catalyzes stereospecifically the conversion of dihydroxyacetone phosphate (DHAP) to D-glyceraldehyde-3-phosphate (G3P). The chain is Triosephosphate isomerase from Shewanella pealeana (strain ATCC 700345 / ANG-SQ1).